Consider the following 642-residue polypeptide: Chaperone protein DnaK (642 aa).

At Thr198 the chain carries Phosphothreonine; by autocatalysis. Residues 602–642 (AYAKMTEKQQSDDGAGTQNADHKEDDVVDADFEEVKSDKKD) form a disordered region.

Belongs to the heat shock protein 70 family.

Its function is as follows. Acts as a chaperone. The sequence is that of Chaperone protein DnaK from Dichelobacter nodosus (strain VCS1703A).